We begin with the raw amino-acid sequence, 298 residues long: Estradiol 17-beta-dehydrogenase 11 (298 aa).

The N-terminal stretch at 1–21 is a signal peptide; that stretch reads MKYLLDLILLLPLLIVFSIES. 40 to 64 is a binding site for NADP(+); that stretch reads LITGAGHGIGRLTAYEFAKLNTKLV. Ser172 contacts substrate. The active-site Proton acceptor is Tyr185.

It belongs to the short-chain dehydrogenases/reductases (SDR) family. 17-beta-HSD 3 subfamily. In terms of tissue distribution, expressed in the liver (at protein level). Also expressed in the intestine and, at much lower levels, in the kidney.

The protein localises to the endoplasmic reticulum. The protein resides in the lipid droplet. It carries out the reaction 17beta-estradiol + NAD(+) = estrone + NADH + H(+). The catalysed reaction is 17beta-estradiol + NADP(+) = estrone + NADPH + H(+). In terms of biological role, can convert androstan-3-alpha,17-beta-diol (3-alpha-diol) to androsterone in vitro, suggesting that it may participate in androgen metabolism during steroidogenesis. May act by metabolizing compounds that stimulate steroid synthesis and/or by generating metabolites that inhibit it. Has no activity toward DHEA (dehydroepiandrosterone), or A-dione (4-androste-3,17-dione), and only a slight activity toward testosterone to A-dione. The chain is Estradiol 17-beta-dehydrogenase 11 (Hsd17b11) from Mus musculus (Mouse).